Consider the following 563-residue polypeptide: Chitinase A (563 aa).

Residues 1–23 (MRKFNKPLLALLIGSTLCSAAQA) form the signal peptide. The region spanning 158–559 (KVVGSYFVEW…NSMNASLGNS (402 aa)) is the GH18 domain. E315 serves as the catalytic Proton donor.

This sequence belongs to the glycosyl hydrolase 18 family. Chitinase class II subfamily.

It catalyses the reaction Random endo-hydrolysis of N-acetyl-beta-D-glucosaminide (1-&gt;4)-beta-linkages in chitin and chitodextrins.. This is Chitinase A (chiA) from Serratia marcescens.